The primary structure comprises 209 residues: Small ribosomal subunit protein uS4 (209 aa).

One can recognise an S4 RNA-binding domain in the interval 99–179 (GRLDSVAYRM…FPEWIEVDAK (81 aa)).

Belongs to the universal ribosomal protein uS4 family. Part of the 30S ribosomal subunit. Contacts protein S5. The interaction surface between S4 and S5 is involved in control of translational fidelity.

Its function is as follows. One of the primary rRNA binding proteins, it binds directly to 16S rRNA where it nucleates assembly of the body of the 30S subunit. With S5 and S12 plays an important role in translational accuracy. This chain is Small ribosomal subunit protein uS4, found in Azoarcus sp. (strain BH72).